A 381-amino-acid chain; its full sequence is Alkanesulfonate monooxygenase (381 aa).

This sequence belongs to the SsuD family. Homotetramer.

It catalyses the reaction an alkanesulfonate + FMNH2 + O2 = an aldehyde + FMN + sulfite + H2O + 2 H(+). Its function is as follows. Catalyzes the desulfonation of aliphatic sulfonates. This Escherichia coli O127:H6 (strain E2348/69 / EPEC) protein is Alkanesulfonate monooxygenase.